A 375-amino-acid polypeptide reads, in one-letter code: Chaperone protein DnaJ (375 aa).

Residues 5–70 form the J domain; sequence DYYEVLGVNR…RKRASYDQFG (66 aa). A CR-type zinc finger spans residues 133 to 211; the sequence is GLSRTIKVPT…CHGQGRQQQT (79 aa). 8 residues coordinate Zn(2+): C146, C149, C163, C166, C185, C188, C199, and C202. 4 CXXCXGXG motif repeats span residues 146–153, 163–170, 185–192, and 199–206; these read CKTCNGSG, CPRCNGSG, CSVCRGRG, and CTDCHGQG.

Belongs to the DnaJ family. In terms of assembly, homodimer. The cofactor is Zn(2+).

The protein resides in the cytoplasm. Functionally, participates actively in the response to hyperosmotic and heat shock by preventing the aggregation of stress-denatured proteins and by disaggregating proteins, also in an autonomous, DnaK-independent fashion. Unfolded proteins bind initially to DnaJ; upon interaction with the DnaJ-bound protein, DnaK hydrolyzes its bound ATP, resulting in the formation of a stable complex. GrpE releases ADP from DnaK; ATP binding to DnaK triggers the release of the substrate protein, thus completing the reaction cycle. Several rounds of ATP-dependent interactions between DnaJ, DnaK and GrpE are required for fully efficient folding. Also involved, together with DnaK and GrpE, in the DNA replication of plasmids through activation of initiation proteins. This is Chaperone protein DnaJ from Coxiella burnetii (strain CbuK_Q154) (Coxiella burnetii (strain Q154)).